The primary structure comprises 81 residues: ATP synthase subunit c, chloroplastic (81 aa).

The next 2 membrane-spanning stretches (helical) occupy residues 3–23 and 57–77; these read AIVS…AAIG and LAFM…LLFA.

The protein belongs to the ATPase C chain family. In terms of assembly, F-type ATPases have 2 components, F(1) - the catalytic core - and F(0) - the membrane proton channel. F(1) has five subunits: alpha(3), beta(3), gamma(1), delta(1), epsilon(1). F(0) has four main subunits: a(1), b(1), b'(1) and c(10-14). The alpha and beta chains form an alternating ring which encloses part of the gamma chain. F(1) is attached to F(0) by a central stalk formed by the gamma and epsilon chains, while a peripheral stalk is formed by the delta, b and b' chains.

It is found in the plastid. Its subcellular location is the chloroplast thylakoid membrane. Its function is as follows. F(1)F(0) ATP synthase produces ATP from ADP in the presence of a proton or sodium gradient. F-type ATPases consist of two structural domains, F(1) containing the extramembraneous catalytic core and F(0) containing the membrane proton channel, linked together by a central stalk and a peripheral stalk. During catalysis, ATP synthesis in the catalytic domain of F(1) is coupled via a rotary mechanism of the central stalk subunits to proton translocation. In terms of biological role, key component of the F(0) channel; it plays a direct role in translocation across the membrane. A homomeric c-ring of between 10-14 subunits forms the central stalk rotor element with the F(1) delta and epsilon subunits. The sequence is that of ATP synthase subunit c, chloroplastic from Cyanidioschyzon merolae (strain NIES-3377 / 10D) (Unicellular red alga).